The chain runs to 467 residues: Cysteine--tRNA ligase (467 aa).

Residue C29 coordinates Zn(2+). A 'HIGH' region motif is present at residues P31–N41. Zn(2+)-binding residues include C209, H234, and E238. A 'KMSKS' region motif is present at residues K267–S271. Residue K270 participates in ATP binding.

It belongs to the class-I aminoacyl-tRNA synthetase family. In terms of assembly, monomer. The cofactor is Zn(2+).

The protein localises to the cytoplasm. It catalyses the reaction tRNA(Cys) + L-cysteine + ATP = L-cysteinyl-tRNA(Cys) + AMP + diphosphate. This Xylella fastidiosa (strain Temecula1 / ATCC 700964) protein is Cysteine--tRNA ligase.